The sequence spans 244 residues: Ribosomal RNA small subunit methyltransferase NEP1 (244 aa).

The interval 1–33 (MSAASGGFQPRERRFSVQEQDWETTPPKKLRLG) is disordered. 2 positions are modified to phosphoserine: Ser5 and Ser16. Residues Thr176, Gly201, Gly206, and 219–224 (ISNYPL) contribute to the S-adenosyl-L-methionine site.

It belongs to the class IV-like SAM-binding methyltransferase superfamily. RNA methyltransferase NEP1 family. As to quaternary structure, homodimer. Part of the small subunit (SSU) processome, composed of more than 70 proteins and the RNA chaperone small nucleolar RNA (snoRNA) U3.

It localises to the nucleus. Its subcellular location is the nucleolus. It carries out the reaction pseudouridine(1248) in human 18S rRNA + S-adenosyl-L-methionine = N(1)-methylpseudouridine(1248) in human 18S rRNA + S-adenosyl-L-homocysteine + H(+). Its function is as follows. S-adenosyl-L-methionine-dependent pseudouridine N(1)-methyltransferase that methylates pseudouridine at position in 18S rRNA. Involved the biosynthesis of the hypermodified N1-methyl-N3-(3-amino-3-carboxypropyl) pseudouridine (m1acp3-Psi) conserved in eukaryotic 18S rRNA. Is not able to methylate uridine at this position. Also has an essential role in 40S ribosomal subunit biogenesis independent on its methyltransferase activity, facilitating the incorporation of ribosomal protein S19 during the formation of pre-ribosomes. Part of the small subunit (SSU) processome, first precursor of the small eukaryotic ribosomal subunit. During the assembly of the SSU processome in the nucleolus, many ribosome biogenesis factors, an RNA chaperone and ribosomal proteins associate with the nascent pre-rRNA and work in concert to generate RNA folding, modifications, rearrangements and cleavage as well as targeted degradation of pre-ribosomal RNA by the RNA exosome. The polypeptide is Ribosomal RNA small subunit methyltransferase NEP1 (Mus musculus (Mouse)).